The chain runs to 144 residues: Large ribosomal subunit protein uL24 (144 aa).

A disordered region spans residues 1–22 (MKFNKMVSSDRGKNRKRHFNAP). Positions 13-22 (KNRKRHFNAP) are enriched in basic residues.

It belongs to the universal ribosomal protein uL24 family.

This is Large ribosomal subunit protein uL24 (RPL26) from Littorina littorea (Common periwinkle).